Consider the following 624-residue polypeptide: Alpha-mannosidase I MNS4 (624 aa).

Topologically, residues 1–7 (MDSNFKW) are cytoplasmic. The helical; Signal-anchor for type II membrane protein transmembrane segment at 8–28 (LLFAILISLTFSGFVLHHGVL) threads the bilayer. At 29-624 (AESVKPDEAK…ETDDQRSYSS (596 aa)) the chain is on the lumenal side. A glycan (N-linked (GlcNAc...) asparagine) is linked at N115. E122 (proton donor) is an active-site residue. Residue D262 is part of the active site. E355 functions as the Proton donor in the catalytic mechanism. E376 is an active-site residue. T466 is a binding site for Ca(2+). Residue N494 is glycosylated (N-linked (GlcNAc...) asparagine). A disordered region spans residues 574 to 624 (QTVEKRPQEEEGFTSQSEPIMTISGGSSNDQTGQELTLLESETDDQRSYSS). Positions 586-608 (FTSQSEPIMTISGGSSNDQTGQE) are enriched in polar residues.

It belongs to the glycosyl hydrolase 47 family. Ca(2+) serves as cofactor.

It localises to the endoplasmic reticulum membrane. Its pathway is protein modification; protein glycosylation. Its function is as follows. Can convert Man(9)GlcNAc(2) and Man(8)GlcNAc(2) into N-glycans with a terminal alpha-1,6-linked Man residue in the C-branch. Functions in the formation of unique N-glycan structures that are specifically recognized by components of the endoplasmic reticulum-associated degradation (ERAD) machinery, which leads to the degradation of misfolded glycoproteins. Most likely generates N-glycan signal on misfolded glycoproteins that is subsequently recognized by OS9. Required for ERAD of the heavily glycosylated and misfolded BRI1 variants BRI1-5 and BRI1-9. Does not seem to play role in N-glycan processing of correctly folded proteins destined for secretion. The polypeptide is Alpha-mannosidase I MNS4 (MNS4) (Arabidopsis thaliana (Mouse-ear cress)).